A 78-amino-acid polypeptide reads, in one-letter code: Small ribosomal subunit protein bS18 (78 aa).

This sequence belongs to the bacterial ribosomal protein bS18 family. As to quaternary structure, part of the 30S ribosomal subunit. Forms a tight heterodimer with protein bS6.

Functionally, binds as a heterodimer with protein bS6 to the central domain of the 16S rRNA, where it helps stabilize the platform of the 30S subunit. In Geobacillus kaustophilus (strain HTA426), this protein is Small ribosomal subunit protein bS18.